The sequence spans 427 residues: Four-jointed box protein 1 (427 aa).

An N-terminal signal peptide occupies residues 1-18 (MRALSANLFAVLLMCALA). N-linked (GlcNAc...) asparagine glycans are attached at residues Asn81, Asn244, and Asn270.

Its subcellular location is the secreted. Its function is as follows. May act as an inhibitor of dendrite extension and branching. The chain is Four-jointed box protein 1 (fjx1) from Xiphophorus maculatus (Southern platyfish).